The chain runs to 869 residues: Phenylalanine--tRNA ligase beta subunit (869 aa).

The 122-residue stretch at 41-162 folds into the tRNA-binding domain; the sequence is SQVTGPIVVG…QYGFSEAEYE (122 aa). Residues 443–519 form the B5 domain; the sequence is PRAKAIHFKA…RLVGYDQIPI (77 aa). 4 residues coordinate Mg(2+): D497, D503, E506, and E507. An FDX-ACB domain is found at 776–868; it reads STFPPVKQDL…EAAEIGAQLR (93 aa).

This sequence belongs to the phenylalanyl-tRNA synthetase beta subunit family. Type 1 subfamily. Tetramer of two alpha and two beta subunits. Mg(2+) serves as cofactor.

The protein resides in the cytoplasm. It catalyses the reaction tRNA(Phe) + L-phenylalanine + ATP = L-phenylalanyl-tRNA(Phe) + AMP + diphosphate + H(+). The chain is Phenylalanine--tRNA ligase beta subunit from Bifidobacterium longum (strain NCC 2705).